The following is a 335-amino-acid chain: Succinylglutamate desuccinylase (335 aa).

Zn(2+) is bound by residues histidine 59, glutamate 62, and histidine 151. The active site involves glutamate 215.

It belongs to the AspA/AstE family. Succinylglutamate desuccinylase subfamily. Zn(2+) serves as cofactor.

It catalyses the reaction N-succinyl-L-glutamate + H2O = L-glutamate + succinate. It participates in amino-acid degradation; L-arginine degradation via AST pathway; L-glutamate and succinate from L-arginine: step 5/5. Functionally, transforms N(2)-succinylglutamate into succinate and glutamate. The protein is Succinylglutamate desuccinylase of Pseudomonas putida (strain GB-1).